A 426-amino-acid polypeptide reads, in one-letter code: Trigger factor (426 aa).

The PPIase FKBP-type domain occupies 166–249 (GDIVTFDFKG…IIEVKARELP (84 aa)).

It belongs to the FKBP-type PPIase family. Tig subfamily.

The protein localises to the cytoplasm. It catalyses the reaction [protein]-peptidylproline (omega=180) = [protein]-peptidylproline (omega=0). Its function is as follows. Involved in protein export. Acts as a chaperone by maintaining the newly synthesized protein in an open conformation. Functions as a peptidyl-prolyl cis-trans isomerase. This chain is Trigger factor, found in Mesoplasma florum (strain ATCC 33453 / NBRC 100688 / NCTC 11704 / L1) (Acholeplasma florum).